A 375-amino-acid polypeptide reads, in one-letter code: DNA replication and repair protein RecF (375 aa).

Residue G30–T37 coordinates ATP.

This sequence belongs to the RecF family.

It is found in the cytoplasm. In terms of biological role, the RecF protein is involved in DNA metabolism; it is required for DNA replication and normal SOS inducibility. RecF binds preferentially to single-stranded, linear DNA. It also seems to bind ATP. The sequence is that of DNA replication and repair protein RecF from Bacillus cereus (strain G9842).